Reading from the N-terminus, the 51-residue chain is MPSHKSFRTKQKLAKAARQNRPIPQWIRLRTGNTVHYNMKRRHWRRTKLNI.

Residues 1–15 are compositionally biased toward basic residues; that stretch reads MPSHKSFRTKQKLAK. The tract at residues 1-21 is disordered; that stretch reads MPSHKSFRTKQKLAKAARQNR.

This sequence belongs to the eukaryotic ribosomal protein eL39 family. As to quaternary structure, component of the large ribosomal subunit (LSU). Mature yeast ribosomes consist of a small (40S) and a large (60S) subunit. The 40S small subunit contains 1 molecule of ribosomal RNA (18S rRNA) and at least 33 different proteins. The large 60S subunit contains 3 rRNA molecules (25S, 5.8S and 5S rRNA) and at least 46 different proteins. eL39 interacts with yih1.

Its subcellular location is the cytoplasm. Its function is as follows. Component of the ribosome, a large ribonucleoprotein complex responsible for the synthesis of proteins in the cell. The small ribosomal subunit (SSU) binds messenger RNAs (mRNAs) and translates the encoded message by selecting cognate aminoacyl-transfer RNA (tRNA) molecules. The large subunit (LSU) contains the ribosomal catalytic site termed the peptidyl transferase center (PTC), which catalyzes the formation of peptide bonds, thereby polymerizing the amino acids delivered by tRNAs into a polypeptide chain. The nascent polypeptides leave the ribosome through a tunnel in the LSU and interact with protein factors that function in enzymatic processing, targeting, and the membrane insertion of nascent chains at the exit of the ribosomal tunnel. The polypeptide is Large ribosomal subunit protein eL39 (rpl39) (Schizosaccharomyces pombe (strain 972 / ATCC 24843) (Fission yeast)).